Reading from the N-terminus, the 98-residue chain is Protein FAM24A (98 aa).

A signal peptide spans 1-29 (MFDLRTKVMIGIASTLLIAAIVLITVVFC).

It belongs to the FAM24 family.

It localises to the secreted. This is Protein FAM24A (Fam24a) from Rattus norvegicus (Rat).